The chain runs to 325 residues: Glutarate 2-hydroxylase (325 aa).

Histidine 160, aspartate 162, and histidine 292 together coordinate Fe cation.

The protein belongs to the glutarate hydroxylase family. Homotetramer. The cofactor is Fe(2+).

It carries out the reaction glutarate + 2-oxoglutarate + O2 = (S)-2-hydroxyglutarate + succinate + CO2. It functions in the pathway amino-acid degradation. Its function is as follows. Acts as an alpha-ketoglutarate-dependent dioxygenase catalyzing hydroxylation of glutarate (GA) to L-2-hydroxyglutarate (L2HG). Functions in a L-lysine degradation pathway that proceeds via cadaverine, glutarate and L-2-hydroxyglutarate. The sequence is that of Glutarate 2-hydroxylase from Escherichia coli O7:K1 (strain IAI39 / ExPEC).